Here is a 178-residue protein sequence, read N- to C-terminus: Ribonuclease M5 (178 aa).

One can recognise a Toprim domain in the interval 4-100 (NEFIVVEGRD…KIGVEHADLI (97 aa)). 3 residues coordinate Mg(2+): E10, D56, and D58.

The protein belongs to the ribonuclease M5 family. It depends on Mg(2+) as a cofactor.

It is found in the cytoplasm. It catalyses the reaction Endonucleolytic cleavage of RNA, removing 21 and 42 nucleotides, respectively, from the 5'- and 3'-termini of a 5S-rRNA precursor.. Required for correct processing of both the 5' and 3' ends of 5S rRNA precursor. Cleaves both sides of a double-stranded region yielding mature 5S rRNA in one step. The chain is Ribonuclease M5 from Staphylococcus aureus (strain NCTC 8325 / PS 47).